We begin with the raw amino-acid sequence, 550 residues long: Arginine--tRNA ligase (550 aa).

Residues 124-134 carry the 'HIGH' region motif; it reads ANPTGPLHVGH.

This sequence belongs to the class-I aminoacyl-tRNA synthetase family. Monomer.

The protein resides in the cytoplasm. It catalyses the reaction tRNA(Arg) + L-arginine + ATP = L-arginyl-tRNA(Arg) + AMP + diphosphate. This Desulfovibrio desulfuricans (strain ATCC 27774 / DSM 6949 / MB) protein is Arginine--tRNA ligase.